Here is a 245-residue protein sequence, read N- to C-terminus: Probable ABC transporter permease protein HI_0355 (245 aa).

6 consecutive transmembrane segments (helical) span residues 9-29 (LLIV…GSFP), 61-81 (ICLG…LLSF), 92-112 (ILVI…VLWF), 115-135 (GMAS…TAAC), 170-190 (LPAF…GAVV), and 217-237 (FAAL…IDWL). One can recognise an ABC transmembrane type-1 domain in the interval 50–234 (LWQHTQVTLL…SISLCLYFSI (185 aa)).

This sequence belongs to the binding-protein-dependent transport system permease family. CysTW subfamily.

It is found in the cell inner membrane. Functionally, probably part of a binding-protein-dependent transport system. Probably responsible for the translocation of the substrate across the membrane. In Haemophilus influenzae (strain ATCC 51907 / DSM 11121 / KW20 / Rd), this protein is Probable ABC transporter permease protein HI_0355.